The chain runs to 201 residues: Putative tRNA-binding protein YtpR (201 aa).

Positions 90 to 200 constitute a tRNA-binding domain; that stretch reads VDLSPKFVVG…GDYEAGDAFQ (111 aa).

In Bacillus subtilis (strain 168), this protein is Putative tRNA-binding protein YtpR (ytpR).